Consider the following 318-residue polypeptide: Methionyl-tRNA formyltransferase (318 aa).

Position 114–117 (serine 114–proline 117) interacts with (6S)-5,6,7,8-tetrahydrofolate.

It belongs to the Fmt family.

It carries out the reaction L-methionyl-tRNA(fMet) + (6R)-10-formyltetrahydrofolate = N-formyl-L-methionyl-tRNA(fMet) + (6S)-5,6,7,8-tetrahydrofolate + H(+). Functionally, attaches a formyl group to the free amino group of methionyl-tRNA(fMet). The formyl group appears to play a dual role in the initiator identity of N-formylmethionyl-tRNA by promoting its recognition by IF2 and preventing the misappropriation of this tRNA by the elongation apparatus. The polypeptide is Methionyl-tRNA formyltransferase (Bdellovibrio bacteriovorus (strain ATCC 15356 / DSM 50701 / NCIMB 9529 / HD100)).